Consider the following 75-residue polypeptide: Small ribosomal subunit protein bS16 (75 aa).

Belongs to the bacterial ribosomal protein bS16 family.

In Aliarcobacter butzleri (strain RM4018) (Arcobacter butzleri), this protein is Small ribosomal subunit protein bS16.